We begin with the raw amino-acid sequence, 328 residues long: Beta-ketoacyl-[acyl-carrier-protein] synthase III (328 aa).

Active-site residues include C113 and H252. Residues 253–257 (QANLR) are ACP-binding. N282 is an active-site residue.

It belongs to the thiolase-like superfamily. FabH family. As to quaternary structure, homodimer.

The protein localises to the cytoplasm. The enzyme catalyses malonyl-[ACP] + acetyl-CoA + H(+) = 3-oxobutanoyl-[ACP] + CO2 + CoA. It participates in lipid metabolism; fatty acid biosynthesis. Catalyzes the condensation reaction of fatty acid synthesis by the addition to an acyl acceptor of two carbons from malonyl-ACP. Catalyzes the first condensation reaction which initiates fatty acid synthesis and may therefore play a role in governing the total rate of fatty acid production. Possesses both acetoacetyl-ACP synthase and acetyl transacylase activities. Its substrate specificity determines the biosynthesis of branched-chain and/or straight-chain of fatty acids. The protein is Beta-ketoacyl-[acyl-carrier-protein] synthase III of Campylobacter fetus subsp. fetus (strain 82-40).